The following is a 393-amino-acid chain: 4-hydroxyphenylpyruvate dioxygenase (393 aa).

An N-acetylthreonine modification is found at Thr-2. VOC domains follow at residues 18-149 (HFHS…LVEK) and 180-338 (IIDH…IFTK). Lys-132 is subject to N6-succinyllysine. His-183 serves as a coordination point for Fe cation. Residues Ser-211, Ser-226, and Ser-250 each carry the phosphoserine modification. His-266 and Glu-349 together coordinate Fe cation.

The protein belongs to the 4HPPD family. In terms of assembly, homodimer. Fe cation serves as cofactor.

It localises to the cytoplasm. The protein resides in the endoplasmic reticulum membrane. The protein localises to the golgi apparatus membrane. The catalysed reaction is 3-(4-hydroxyphenyl)pyruvate + O2 = homogentisate + CO2. Its pathway is amino-acid degradation; L-phenylalanine degradation; acetoacetate and fumarate from L-phenylalanine: step 3/6. Functionally, catalyzes the conversion of 4-hydroxyphenylpyruvic acid to homogentisic acid, one of the steps in tyrosine catabolism. This chain is 4-hydroxyphenylpyruvate dioxygenase (Hpd), found in Mus musculus (Mouse).